The sequence spans 716 residues: Leucine-rich repeat neuronal protein 1 (716 aa).

The signal sequence occupies residues 1 to 25 (MARMSFVIAACQLVLGLLMTSLTES). An LRRNT domain is found at 26-72 (SIQNSECPQLCVCEIRPWFTPQSTYREATTVDCNDLRLTRIPSNLSS). At 26-631 (SIQNSECPQL…DISDQETSTA (606 aa)) the chain is on the extracellular side. 11 LRR repeats span residues 73 to 95 (DTQVLLLQSNNIAKTVDELQQLF), 96 to 117 (NLTELDFSQNNFTNIKEVGLAN), 120 to 141 (QLTTLHLEENQITEMTDYCLQD), 144 to 165 (NLQELYINHNQISTISAHAFAG), 168 to 189 (NLLRLHLNSNKLKVIDSRWFDS), 192 to 213 (NLEILMIGENPVIGILDMNFKP), 216 to 237 (NLRSLVLAGMYLTDIPGNALVG), 240 to 261 (SLESLSFYDNKLVKVPQLALQK), 264 to 285 (NLKFLDLNKNPIHKIQEGDFKN), 313 to 335 (ELTKLEATNNPKLSYIHRLAFRS), and 338 to 359 (ALESLMLNNNALNAIYQKTVES). N-linked (GlcNAc...) asparagine glycans are attached at residues Asn96 and Asn117. Residues 371-424 (NPLRCDCVIHWINSNKTNIRFMEPLSMFCAMPPEYKGHQVKEVLIQDSSEQCLP) form the LRRCT domain. N-linked (GlcNAc...) asparagine glycosylation is present at Asn385. One can recognise an Ig-like C2-type domain in the interval 424–515 (PMISHDSFPN…GADTRVATIK (92 aa)). A disulfide bridge links Cys447 with Cys499. The N-linked (GlcNAc...) asparagine glycan is linked to Asn517. Residues 525-617 (QVLKIYVKQT…SCVNVTTKNA (93 aa)) enclose the Fibronectin type-III domain. Residues 632 to 652 (LAAVMGSMFAVISLASIAVYF) traverse the membrane as a helical segment. The Cytoplasmic portion of the chain corresponds to 653 to 716 (AKRFKRKNYH…VDTSRSYYMW (64 aa)). Basic and acidic residues predominate over residues 691 to 700 (DSEKDKDGSA). The segment at 691–716 (DSEKDKDGSADTKPTQVDTSRSYYMW) is disordered. Residues 702–716 (TKPTQVDTSRSYYMW) show a composition bias toward polar residues.

Its subcellular location is the membrane. This chain is Leucine-rich repeat neuronal protein 1 (LRRN1), found in Homo sapiens (Human).